A 435-amino-acid chain; its full sequence is Trigger factor (435 aa).

One can recognise a PPIase FKBP-type domain in the interval 164–249; that stretch reads GDFAKFDFEG…LHEIQGKKAG (86 aa).

This sequence belongs to the FKBP-type PPIase family. Tig subfamily.

It is found in the cytoplasm. It carries out the reaction [protein]-peptidylproline (omega=180) = [protein]-peptidylproline (omega=0). Its function is as follows. Involved in protein export. Acts as a chaperone by maintaining the newly synthesized protein in an open conformation. Functions as a peptidyl-prolyl cis-trans isomerase. The sequence is that of Trigger factor from Campylobacter fetus subsp. fetus (strain 82-40).